The sequence spans 607 residues: COMPASS component cclA (607 aa).

Low complexity predominate over residues 1 to 19; that stretch reads MASTHAAGSPAPSSSINSP. Disordered stretches follow at residues 1-22 and 34-86; these read MAST…PILH and GEGS…KSVA. A compositionally biased stretch (basic residues) spans 57–69; it reads SKRNKRDSRKKRE. The region spanning 157 to 376 is the B30.2/SPRY domain; it reads IADTDFPHIK…YAFNLKETPA (220 aa). Residues 587–607 form a disordered region; the sequence is NTPITDVPVPPEPEDTPMTGG.

This sequence belongs to the cclA family. Component of the COMPASS complex.

The protein resides in the nucleus. Its subcellular location is the chromosome. The protein localises to the telomere. Functionally, component of the COMPASS (Set1C) complex that specifically mono-, di- and trimethylates histone H3 to form H3K4me1/2/3, which subsequently plays a role in telomere length maintenance and transcription elongation regulation. Controls the production of several secondary metabolites, including monodictyphenone, emodin and emodin derivatives, as well as two anti-osteoporosis polyketides, F9775A and F9775B. In Emericella nidulans (strain FGSC A4 / ATCC 38163 / CBS 112.46 / NRRL 194 / M139) (Aspergillus nidulans), this protein is COMPASS component cclA.